A 348-amino-acid chain; its full sequence is Serine/threonine-protein kinase SBK2 (348 aa).

The segment at 1 to 25 (MPGKQSEEGPAEAGASEDSEEEGLG) is disordered. The region spanning 62–330 (YEEVRPLGQG…IREHLGRPWR (269 aa)) is the Protein kinase domain. Residues 68 to 76 (LGQGCYGRV) and Lys-91 each bind ATP. Asp-183 (proton acceptor) is an active-site residue.

Belongs to the protein kinase superfamily. Ser/Thr protein kinase family. STKL subfamily.

It catalyses the reaction L-seryl-[protein] + ATP = O-phospho-L-seryl-[protein] + ADP + H(+). The catalysed reaction is L-threonyl-[protein] + ATP = O-phospho-L-threonyl-[protein] + ADP + H(+). This is Serine/threonine-protein kinase SBK2 (SBK2) from Homo sapiens (Human).